The sequence spans 245 residues: 1-(5-phosphoribosyl)-5-[(5-phosphoribosylamino)methylideneamino] imidazole-4-carboxamide isomerase (245 aa).

Residue Asp7 is the Proton acceptor of the active site. Asp129 functions as the Proton donor in the catalytic mechanism.

This sequence belongs to the HisA/HisF family.

It is found in the cytoplasm. The catalysed reaction is 1-(5-phospho-beta-D-ribosyl)-5-[(5-phospho-beta-D-ribosylamino)methylideneamino]imidazole-4-carboxamide = 5-[(5-phospho-1-deoxy-D-ribulos-1-ylimino)methylamino]-1-(5-phospho-beta-D-ribosyl)imidazole-4-carboxamide. It participates in amino-acid biosynthesis; L-histidine biosynthesis; L-histidine from 5-phospho-alpha-D-ribose 1-diphosphate: step 4/9. The protein is 1-(5-phosphoribosyl)-5-[(5-phosphoribosylamino)methylideneamino] imidazole-4-carboxamide isomerase of Escherichia coli O7:K1 (strain IAI39 / ExPEC).